We begin with the raw amino-acid sequence, 230 residues long: MRNLPIIALDFKSADEVHTFLNKFNEPLCVKIGMELFYQTGPALIKSIKKRGHDIFLDLKLHDIPNTVSKAMEGLARLDVDLVNVHAAGGIKMMEEAKKGLRKHNADIKIIAVTQLTSTTETQLHEEQNIQTSIEEAVLNYARLTKKAGLDGVVCSPLEAEMISKELGTDFLKVTPGIRPKGAARNDQQRITTPEEAKTLGSTHIVVGRPITQSEHPIDSYHKIKESWLS.

Residues aspartate 10, lysine 31, 58–67 (DLKLHDIPNT), threonine 117, arginine 179, glutamine 188, glycine 208, and arginine 209 each bind substrate. The active-site Proton donor is the lysine 60.

Belongs to the OMP decarboxylase family. Type 1 subfamily. Homodimer.

The catalysed reaction is orotidine 5'-phosphate + H(+) = UMP + CO2. It functions in the pathway pyrimidine metabolism; UMP biosynthesis via de novo pathway; UMP from orotate: step 2/2. Its function is as follows. Catalyzes the decarboxylation of orotidine 5'-monophosphate (OMP) to uridine 5'-monophosphate (UMP). The chain is Orotidine 5'-phosphate decarboxylase from Staphylococcus epidermidis (strain ATCC 12228 / FDA PCI 1200).